Consider the following 203-residue polypeptide: uncharacterized protein (203 aa).

This is an uncharacterized protein from Methanocaldococcus jannaschii (strain ATCC 43067 / DSM 2661 / JAL-1 / JCM 10045 / NBRC 100440) (Methanococcus jannaschii).